A 502-amino-acid polypeptide reads, in one-letter code: Probable glycine dehydrogenase (decarboxylating) subunit 2 (502 aa).

K273 is subject to N6-(pyridoxal phosphate)lysine.

It belongs to the GcvP family. C-terminal subunit subfamily. In terms of assembly, the glycine cleavage system is composed of four proteins: P, T, L and H. In this organism, the P 'protein' is a heterodimer of two subunits. Pyridoxal 5'-phosphate is required as a cofactor.

The catalysed reaction is N(6)-[(R)-lipoyl]-L-lysyl-[glycine-cleavage complex H protein] + glycine + H(+) = N(6)-[(R)-S(8)-aminomethyldihydrolipoyl]-L-lysyl-[glycine-cleavage complex H protein] + CO2. The glycine cleavage system catalyzes the degradation of glycine. The P protein binds the alpha-amino group of glycine through its pyridoxal phosphate cofactor; CO(2) is released and the remaining methylamine moiety is then transferred to the lipoamide cofactor of the H protein. This is Probable glycine dehydrogenase (decarboxylating) subunit 2 from Pyrococcus furiosus (strain ATCC 43587 / DSM 3638 / JCM 8422 / Vc1).